The sequence spans 131 residues: Small ribosomal subunit protein uS11 (131 aa).

This sequence belongs to the universal ribosomal protein uS11 family. Part of the 30S ribosomal subunit. Interacts with proteins S7 and S18. Binds to IF-3.

Functionally, located on the platform of the 30S subunit, it bridges several disparate RNA helices of the 16S rRNA. Forms part of the Shine-Dalgarno cleft in the 70S ribosome. The protein is Small ribosomal subunit protein uS11 of Deinococcus radiodurans (strain ATCC 13939 / DSM 20539 / JCM 16871 / CCUG 27074 / LMG 4051 / NBRC 15346 / NCIMB 9279 / VKM B-1422 / R1).